The chain runs to 364 residues: MKRTPLFEKHVGLGAKMVDFAGWEMPLYYTSIFEEVMAVRKSVGMFDVSHMGEFLVKGPEAVSFIDFLITNDFSSLPDGKAIYSVMCNENGGIIDDLVVYKVSPDEALMVVNAANIEKDFNWIKSHSKNFDVEILNISDTTALIAFQGPEAQETLQELVEDSLEEIAYYSFRKSIVAGVEALVSRTGYTGEDGFELMLEAKDAPKVWDALMNLLRKIDGRPAGLGARDVCRLEATYLLYGQDMDESTNPLEVGLSWVVKLDKDFVGKEALLKAKEKVERKLVALELSGKRIARKGYEVLKNGERVGEITSGNFSPTLGKSIALALVSKSVKVGDQLEVAFPGGKLVEALVVKKPFYRGSVRREV.

The protein belongs to the GcvT family. As to quaternary structure, the glycine cleavage system is composed of four proteins: P, T, L and H.

The enzyme catalyses N(6)-[(R)-S(8)-aminomethyldihydrolipoyl]-L-lysyl-[protein] + (6S)-5,6,7,8-tetrahydrofolate = N(6)-[(R)-dihydrolipoyl]-L-lysyl-[protein] + (6R)-5,10-methylene-5,6,7,8-tetrahydrofolate + NH4(+). Its function is as follows. The glycine cleavage system catalyzes the degradation of glycine. The sequence is that of Aminomethyltransferase from Thermotoga petrophila (strain ATCC BAA-488 / DSM 13995 / JCM 10881 / RKU-1).